Reading from the N-terminus, the 143-residue chain is Protein SLC31A2 (143 aa).

Topologically, residues 1–22 (MPMHFIFSDEAVLLFDFWRVHS) are extracellular. The chain crosses the membrane as a helical span at residues 23–43 (PTGMALSVLVVLLLAVLYEGI). Residues 44–93 (KVGKAKLLHKTLESLPATNSQQFILGPDQDSTGSRSTSDNRTRLRWFLCY) are Cytoplasmic-facing. At Thr-75 the chain carries Phosphothreonine. Ser-77 is modified (phosphoserine). The chain crosses the membrane as a helical span at residues 94 to 114 (FGQSLVHVIQVVIGYFVMLAV). Topologically, residues 115–119 (MSYNT) are extracellular. The helical transmembrane segment at 120 to 140 (WIFLGVVLGSAVGYYLAYPLL) threads the bilayer. Residues 141–143 (NMT) are Cytoplasmic-facing.

The protein belongs to the copper transporter (Ctr) (TC 1.A.56) family. SLC31A subfamily. In terms of assembly, oligomer. Interacts with SLC31A1; this interaction stabilizes SLC31A2 and protects it from ubiquitination and the subsequent degradation. In terms of processing, ubiquitinated; ubiquitination and the subsequent proteasomal degradation are prevent by SLC31A1 that stabilizes it.

It is found in the membrane. The protein localises to the cytoplasmic vesicle membrane. The protein resides in the late endosome membrane. It localises to the lysosome membrane. Its subcellular location is the recycling endosome membrane. Its function is as follows. Does not function as a copper(1+) importer in vivo. However, in vitro functions as a low-affinity copper(1+) importer. Regulator of SLC31A1 which facilitates the cleavage of the SLC31A1 ecto-domain or which stabilizes the truncated form of SLC31A1 (Truncated CTR1 form), thereby drives the SLC31A1 truncated form-dependent endosomal copper export and modulates the copper and cisplatin accumulation via SLC31A1. This is Protein SLC31A2 from Mus musculus (Mouse).